The following is a 773-amino-acid chain: DNA gyrase subunit B (773 aa).

The Toprim domain occupies 416-530 (SEIFLVEGDS…QGHVYIAQAP (115 aa)). Mg(2+)-binding residues include E422, D495, and D497.

Belongs to the type II topoisomerase GyrB family. Heterotetramer, composed of two GyrA and two GyrB chains. In the heterotetramer, GyrA contains the active site tyrosine that forms a transient covalent intermediate with DNA, while GyrB binds cofactors and catalyzes ATP hydrolysis. It depends on Mg(2+) as a cofactor. Mn(2+) serves as cofactor. The cofactor is Ca(2+).

The protein localises to the cytoplasm. It carries out the reaction ATP-dependent breakage, passage and rejoining of double-stranded DNA.. A type II topoisomerase that negatively supercoils closed circular double-stranded (ds) DNA in an ATP-dependent manner to modulate DNA topology and maintain chromosomes in an underwound state. Negative supercoiling favors strand separation, and DNA replication, transcription, recombination and repair, all of which involve strand separation. Also able to catalyze the interconversion of other topological isomers of dsDNA rings, including catenanes and knotted rings. Type II topoisomerases break and join 2 DNA strands simultaneously in an ATP-dependent manner. This Helicobacter pylori (strain ATCC 700392 / 26695) (Campylobacter pylori) protein is DNA gyrase subunit B.